A 252-amino-acid polypeptide reads, in one-letter code: uncharacterized protein (252 aa).

Positions Met-1 to Ala-22 are cleaved as a signal peptide. Residue Cys-23 is the site of N-palmitoyl cysteine attachment. Cys-23 carries S-diacylglycerol cysteine lipidation.

Belongs to the staphylococcal tandem lipoprotein family.

It localises to the cell membrane. This is an uncharacterized protein from Staphylococcus aureus (strain MW2).